Here is a 185-residue protein sequence, read N- to C-terminus: Ribosome-recycling factor (185 aa).

The protein belongs to the RRF family.

It localises to the cytoplasm. Functionally, responsible for the release of ribosomes from messenger RNA at the termination of protein biosynthesis. May increase the efficiency of translation by recycling ribosomes from one round of translation to another. The sequence is that of Ribosome-recycling factor from Shewanella woodyi (strain ATCC 51908 / MS32).